We begin with the raw amino-acid sequence, 229 residues long: 2,3-bisphosphoglycerate-dependent phosphoglycerate mutase (229 aa).

Residues 8–15 (RHGKSEWN), 21–22 (TG), Arg-60, 87–90 (ERHY), Lys-98, 114–115 (RR), and 183–184 (GN) each bind substrate. The active-site Tele-phosphohistidine intermediate is His-9. The active-site Proton donor/acceptor is Glu-87.

Belongs to the phosphoglycerate mutase family. BPG-dependent PGAM subfamily. As to quaternary structure, homodimer.

It carries out the reaction (2R)-2-phosphoglycerate = (2R)-3-phosphoglycerate. Its pathway is carbohydrate degradation; glycolysis; pyruvate from D-glyceraldehyde 3-phosphate: step 3/5. Its function is as follows. Catalyzes the interconversion of 2-phosphoglycerate and 3-phosphoglycerate. The sequence is that of 2,3-bisphosphoglycerate-dependent phosphoglycerate mutase from Nautilia profundicola (strain ATCC BAA-1463 / DSM 18972 / AmH).